The chain runs to 194 residues: Putative manganese efflux pump MntP (194 aa).

The next 6 membrane-spanning stretches (helical) occupy residues 3–23 (PFSI…AAIG), 37–57 (LRAG…GWVL), 69–89 (DHWI…IAGL), 110–132 (LGLA…SLAF), 147–167 (CTFS…NLIG), and 172–192 (ILGG…HLGA).

This sequence belongs to the MntP (TC 9.B.29) family.

It localises to the cell inner membrane. In terms of biological role, probably functions as a manganese efflux pump. The chain is Putative manganese efflux pump MntP from Xanthomonas oryzae pv. oryzae (strain MAFF 311018).